Here is a 155-residue protein sequence, read N- to C-terminus: SsrA-binding protein (155 aa).

This sequence belongs to the SmpB family.

The protein resides in the cytoplasm. Required for rescue of stalled ribosomes mediated by trans-translation. Binds to transfer-messenger RNA (tmRNA), required for stable association of tmRNA with ribosomes. tmRNA and SmpB together mimic tRNA shape, replacing the anticodon stem-loop with SmpB. tmRNA is encoded by the ssrA gene; the 2 termini fold to resemble tRNA(Ala) and it encodes a 'tag peptide', a short internal open reading frame. During trans-translation Ala-aminoacylated tmRNA acts like a tRNA, entering the A-site of stalled ribosomes, displacing the stalled mRNA. The ribosome then switches to translate the ORF on the tmRNA; the nascent peptide is terminated with the 'tag peptide' encoded by the tmRNA and targeted for degradation. The ribosome is freed to recommence translation, which seems to be the essential function of trans-translation. This is SsrA-binding protein from Chelativorans sp. (strain BNC1).